The following is a 189-amino-acid chain: ECF RNA polymerase sigma-E factor (189 aa).

Residues 1–153 (MAEQLTDQAL…TAITLRELEG (153 aa)) form a binds RNAP core region. Residues 25–92 (LVSRYQNKVA…KNYLTAQGRR (68 aa)) are sigma-70 factor domain-2. The Polymerase core binding motif lies at 48–61 (DVVQESFIKAYRSI). Residues 129–180 (RIVFDTIHNLPEDLKTAITLRELEGLSYEDIAEIMDCPVGTVRSRIFRAREM) are sigma-70 factor domain-4. The segment at residues 156 to 175 (YEDIAEIMDCPVGTVRSRIF) is a DNA-binding region (H-T-H motif).

It belongs to the sigma-70 factor family. ECF subfamily. In terms of assembly, interacts transiently with the RNAP catalytic core formed by RpoA, RpoB, RpoC and RpoZ (2 alpha, 1 beta, 1 beta' and 1 omega subunit) to form the RNAP holoenzyme that can initiate transcription. Interacts 1:1 with anti-sigma-E factor RseA which prevents binding to RNAP catalytic core.

The protein localises to the cytoplasm. With respect to regulation, ECF sigma-E is held in an inactive form by its cognate anti-sigma factor (RseA) until released by regulated intramembrane proteolysis (RIP). RIP occurs when an extracytoplasmic signal (periplasmic stress and excess LPS) triggers a concerted proteolytic cascade to transmit information and elicit cellular responses. The anti-sigma factor RseA is an inner membrane protein, binding sigma-E in the cytoplasm and RseB in the periplasm. RseA is first cut extracytoplasmically (site-1 protease, S1P, by DegS), then within the membrane itself (site-2 protease, S2P, by RseP), while cytoplasmic proteases (predominantly ClpX-ClpP) finish degrading the regulatory protein, liberating sigma-E. Degradation of RseA requires 2 signals to activate DegS; an outer membrane protein (OMP) signal activates DegS, while an LPS signal causes release of RseB from RseA, freeing RseA to be cleaved. Sigma factors are initiation factors that promote the attachment of RNA polymerase (RNAP) to specific initiation sites and are then released. Extracytoplasmic function (ECF) sigma-E controls the envelope stress response, responding to periplasmic protein stress, increased levels of periplasmic lipopolysaccharide (LPS) as well as heat shock and oxidative stress; it controls protein processing in the extracytoplasmic compartment. This Haemophilus influenzae (strain ATCC 51907 / DSM 11121 / KW20 / Rd) protein is ECF RNA polymerase sigma-E factor (rpoE).